Reading from the N-terminus, the 212-residue chain is Adapter protein MecA 2 (212 aa).

Belongs to the MecA family. In terms of assembly, homodimer.

Enables the recognition and targeting of unfolded and aggregated proteins to the ClpC protease or to other proteins involved in proteolysis. Acts negatively in the development of competence by binding ComK and recruiting it to the ClpCP protease. When overexpressed, inhibits sporulation. Also involved in Spx degradation by ClpC. The protein is Adapter protein MecA 2 (mecA2) of Halalkalibacterium halodurans (strain ATCC BAA-125 / DSM 18197 / FERM 7344 / JCM 9153 / C-125) (Bacillus halodurans).